Here is a 342-residue protein sequence, read N- to C-terminus: Inositol-tetrakisphosphate 1-kinase 1 (342 aa).

1D-myo-inositol 6-phosphate contacts are provided by Lys-28 and Lys-70. Positions 105 and 155 each coordinate ATP. Residues 116-332 (DHAADQDSTF…HKDGVGNQQE (217 aa)) enclose the ATP-grasp domain. Positions 161 and 166 each coordinate 1D-myo-inositol 6-phosphate. Residues His-166, Gln-187, and Val-190 each contribute to the ATP site. Positions 198 and 200 each coordinate 1D-myo-inositol 6-phosphate. Residue Ser-213 coordinates ATP. The catalytic specificity elements (CSE) stretch occupies residues 219 to 247 (PEDDASAQGSVSFSQVSNLPTERTAEEYY). Asn-280 lines the 1D-myo-inositol 6-phosphate pocket. Asp-282 is a Mg(2+) binding site. 3 residues coordinate ATP: Ile-296, Asp-297, and Asn-299. Asp-297 and Asn-299 together coordinate Mg(2+). 3 residues coordinate 1D-myo-inositol 6-phosphate: Asn-299, Gly-303, and Lys-306.

It belongs to the ITPK1 family. Monomer. Mg(2+) is required as a cofactor. In terms of tissue distribution, expressed in the embryo of 15 day after pollination. Expressed in kernels at earlier stages but at very low levels. Expression in the embryo peaks at 15 days after pollination and then declines. No expression is detected from endosperm and vegetative tissues.

The catalysed reaction is 1D-myo-inositol 3,4,5,6-tetrakisphosphate + ATP = 1D-myo-inositol 1,3,4,5,6-pentakisphosphate + ADP + H(+). It catalyses the reaction 1D-myo-inositol 1,3,4-trisphosphate + ATP = 1D-myo-inositol 1,3,4,5-tetrakisphosphate + ADP + H(+). It carries out the reaction 1D-myo-inositol 1,3,4-trisphosphate + ATP = 1D-myo-inositol 1,3,4,6-tetrakisphosphate + ADP + H(+). The enzyme catalyses 1D-myo-inositol 1,2,3,4,5-pentakisphosphate + ATP = 3-diphospho-1D-myo-inositol 1,2,4,5-tetrakisphosphate + ADP. The catalysed reaction is 1D-myo-inositol hexakisphosphate + ATP = 5-diphospho-1D-myo-inositol 1,2,3,4,6-pentakisphosphate + ADP. In terms of biological role, kinase that can phosphorylate various inositol polyphosphate such as Ins(3,4,5,6)P4 or Ins(1,3,4)P3 and participates in phytic acid biosynthesis in developing seeds. Phosphorylates Ins(3,4,5,6)P4 at position 1 to form Ins(1,3,4,5,6)P5. This reaction is thought to have regulatory importance, since Ins(3,4,5,6)P4 is an inhibitor of plasma membrane Ca(2+)-activated Cl(-) channels, while Ins(1,3,4,5,6)P5 is not. Also phosphorylates Ins(1,3,4)P3 on O-5 and O-6 to form Ins(1,3,4,6)P4, an essential molecule in the hexakisphosphate (InsP6) pathway. Also able to phosphorylate Ins(3,5,6)P3 but not Ins(1,4,5)P3, Ins(2,4,5)P3, Ins(1,3,4,6)P4 nor Ins(1,3,5,6)P4. Has higher specific activity on Ins(3,4,5,6)P4 than Ins(1,3,4)P3 and Ins(3,5,6)P3. Can also could use Ins(1,2,5,6)P4 as a substrate. Able to add a beta-phosphate to the 3 positions of Ins(1,2,3,4,5)P5 and to add beta-phosphate to InsP6 to yield 5-InsP7, thus exhibiting InsP6 kinase activity. Also has Ins(1,3,4,5,6)P5 phosphatase activity. In Zea mays (Maize), this protein is Inositol-tetrakisphosphate 1-kinase 1.